Reading from the N-terminus, the 91-residue chain is HssA/B-like protein 52 (91 aa).

Disordered regions lie at residues 1 to 20 and 72 to 91; these read MTLFSSISSISNPMTSSKSS and GGCGGSNGSMGGGNGSCCGI.

It belongs to the hssA/B family.

The sequence is that of HssA/B-like protein 52 (hssl52) from Dictyostelium discoideum (Social amoeba).